Here is a 335-residue protein sequence, read N- to C-terminus: Urokinase plasminogen activator surface receptor (335 aa).

Positions 1 to 22 are cleaved as a signal peptide; that stretch reads MGHPPLLPLLLLLHTCVPASWG. 3 consecutive UPAR/Ly6 domains span residues 23 to 114, 115 to 213, and 214 to 305; these read LRCM…RSRY, LECI…PQNG, and RQCY…YRSG. 3 disulfide bridges follow: cysteine 25–cysteine 46, cysteine 28–cysteine 34, and cysteine 39–cysteine 67. The N-linked (GlcNAc...) asparagine glycan is linked to asparagine 74. 11 disulfides stabilise this stretch: cysteine 93–cysteine 98, cysteine 117–cysteine 144, cysteine 120–cysteine 127, cysteine 137–cysteine 169, cysteine 175–cysteine 192, cysteine 193–cysteine 198, cysteine 216–cysteine 244, cysteine 219–cysteine 227, cysteine 237–cysteine 263, cysteine 269–cysteine 287, and cysteine 288–cysteine 293. An N-linked (GlcNAc...) asparagine glycan is attached at asparagine 124. Asparagine 184, asparagine 194, asparagine 222, and asparagine 255 each carry an N-linked (GlcNAc...) asparagine glycan. Glycine 305 is lipidated: GPI-anchor amidated glycine. A propeptide spans 306–335 (removed in mature form); sequence AAPQPGPAHLSLTITLLMTARLWGGTLLWT.

Monomer. Interacts (via the UPAR/Ly6 domains) with SRPX2. Interacts with MRC2. Interacts with FAP (seprase); the interaction occurs at the cell surface of invadopodia membrane. Interacts with SORL1 (via N-terminal ectodomain); this interaction decreases PLAUR internalization. The ternary complex composed of PLAUR-PLAU-SERPINE1 also interacts with SORL1. Interacts with CD82; this interaction prevents PLAUR from binding to its high affinity ligand PLAU.

The protein resides in the cell membrane. It localises to the cell projection. The protein localises to the invadopodium membrane. Functionally, acts as a receptor for urokinase plasminogen activator. Plays a role in localizing and promoting plasmin formation. Mediates the proteolysis-independent signal transduction activation effects of U-PA. It is subject to negative-feedback regulation by U-PA which cleaves it into an inactive form. This is Urokinase plasminogen activator surface receptor (PLAUR) from Pan troglodytes (Chimpanzee).